Here is a 563-residue protein sequence, read N- to C-terminus: (R)-mandelonitrile lyase 2 (563 aa).

The signal sequence occupies residues 1-27 (MEKSTMSAILLVLYIFVLHLQYSEVHS). Residues 63–64 (TS), 82–83 (ER), V129, T133, and 137–140 (NAGV) contribute to the FAD site. 2 N-linked (GlcNAc...) asparagine glycosylation sites follow: N145 and N162. V244 contacts FAD. C355 provides a ligand contact to substrate. 2 N-linked (GlcNAc...) asparagine glycosylation sites follow: N379 and N419. Residues C426 and C477 are joined by a disulfide bond. Y484 is a substrate binding site. Residues 485 to 486 (WH) and G514 contribute to the FAD site. H486 (proton donor) is an active-site residue. H524 functions as the Proton acceptor in the catalytic mechanism. FAD is bound at residue 525 to 526 (PQ).

It belongs to the GMC oxidoreductase family. Monomer. FAD is required as a cofactor. In terms of processing, glycosylated. Deglycosylation does not affect the enzymatic activity.

It carries out the reaction (R)-mandelonitrile = benzaldehyde + hydrogen cyanide. Its function is as follows. Involved in cyanogenesis, the release of HCN from injured tissues. Catalyzes the stereospecific addition of HCN to a variety of aldehydes in vitro. Has no oxidase activity. The redox properties of the FAD cofactor appear to be unimportant for catalysis. The chain is (R)-mandelonitrile lyase 2 (MDL2) from Prunus dulcis (Almond).